Reading from the N-terminus, the 459-residue chain is ATP synthase subunit beta 1 (459 aa).

Residue 148 to 155 coordinates ATP; the sequence is GGAGVGKT.

This sequence belongs to the ATPase alpha/beta chains family. As to quaternary structure, F-type ATPases have 2 components, CF(1) - the catalytic core - and CF(0) - the membrane proton channel. CF(1) has five subunits: alpha(3), beta(3), gamma(1), delta(1), epsilon(1). CF(0) has three main subunits: a(1), b(2) and c(9-12). The alpha and beta chains form an alternating ring which encloses part of the gamma chain. CF(1) is attached to CF(0) by a central stalk formed by the gamma and epsilon chains, while a peripheral stalk is formed by the delta and b chains.

The protein resides in the cell inner membrane. The enzyme catalyses ATP + H2O + 4 H(+)(in) = ADP + phosphate + 5 H(+)(out). Functionally, produces ATP from ADP in the presence of a proton gradient across the membrane. The catalytic sites are hosted primarily by the beta subunits. The chain is ATP synthase subunit beta 1 from Nitrosospira multiformis (strain ATCC 25196 / NCIMB 11849 / C 71).